The chain runs to 701 residues: Elongation factor G (701 aa).

The region spanning 8 to 286 (ERIRNIGIIA…AIVHYLPSPV (279 aa)) is the tr-type G domain. GTP-binding positions include 17–24 (AHIDAGKT), 85–89 (DTPGH), and 139–142 (NKMD).

This sequence belongs to the TRAFAC class translation factor GTPase superfamily. Classic translation factor GTPase family. EF-G/EF-2 subfamily.

It is found in the cytoplasm. Catalyzes the GTP-dependent ribosomal translocation step during translation elongation. During this step, the ribosome changes from the pre-translocational (PRE) to the post-translocational (POST) state as the newly formed A-site-bound peptidyl-tRNA and P-site-bound deacylated tRNA move to the P and E sites, respectively. Catalyzes the coordinated movement of the two tRNA molecules, the mRNA and conformational changes in the ribosome. The sequence is that of Elongation factor G from Roseiflexus sp. (strain RS-1).